Reading from the N-terminus, the 479-residue chain is NADH-quinone oxidoreductase subunit N (479 aa).

The next 14 helical transmembrane spans lie at 3–23 (MLYGIMPEISLLLSALIFQLI), 40–60 (IGFAAILIAILVFHPSWFNGI), 77–97 (IIILIFYIFLTLIYSGYIKVA), 102–122 (HSEYIVLMQLGALGGLILVSA), 125–145 (FMVMYLGIEMQGIIGYILTTF), 159–179 (YFILGTVFSAIMLFGISLVYG), 200–220 (MAVLVAAILMILVGVLFKLSI), 234–254 (APLVVVALFSSLPKISVLALL), 268–288 (FFYIKTIIMVLACLSLIVGAF), 299–319 (FIAYSAILNLGYAVLALVANS), 327–347 (ISYFYIIIYAASMLGFIAIII), 373–393 (SILIAIQMFSLVGIPPFAGFI), 409–429 (ELIIMGIAAVVIGSYCYLNIV), and 452–472 (LVSIASTIIVISLMIICMLFG).

It belongs to the complex I subunit 2 family. As to quaternary structure, NDH-1 is composed of 14 different subunits. Subunits NuoA, H, J, K, L, M, N constitute the membrane sector of the complex.

It localises to the cell inner membrane. It catalyses the reaction a quinone + NADH + 5 H(+)(in) = a quinol + NAD(+) + 4 H(+)(out). Its function is as follows. NDH-1 shuttles electrons from NADH, via FMN and iron-sulfur (Fe-S) centers, to quinones in the respiratory chain. The immediate electron acceptor for the enzyme in this species is believed to be ubiquinone. Couples the redox reaction to proton translocation (for every two electrons transferred, four hydrogen ions are translocated across the cytoplasmic membrane), and thus conserves the redox energy in a proton gradient. This Orientia tsutsugamushi (strain Ikeda) (Rickettsia tsutsugamushi) protein is NADH-quinone oxidoreductase subunit N.